Here is a 162-residue protein sequence, read N- to C-terminus: Ribosome maturation factor RimP (162 aa).

This sequence belongs to the RimP family.

It is found in the cytoplasm. In terms of biological role, required for maturation of 30S ribosomal subunits. The polypeptide is Ribosome maturation factor RimP (Ralstonia nicotianae (strain ATCC BAA-1114 / GMI1000) (Ralstonia solanacearum)).